A 300-amino-acid chain; its full sequence is Phospholipase A1 (300 aa).

A disulfide bridge links Cys-4 with Cys-87. Catalysis depends on Ser-137, which acts as the Nucleophile. Asp-165 serves as the catalytic Charge relay system. Cystine bridges form between Cys-176–Cys-181 and Cys-219–Cys-227. His-229 serves as the catalytic Charge relay system. Cystine bridges form between Cys-244–Cys-268, Cys-245–Cys-293, and Cys-261–Cys-266.

This sequence belongs to the AB hydrolase superfamily. Lipase family. As to expression, expressed by the venom gland.

The protein resides in the secreted. The catalysed reaction is a 1,2-diacyl-sn-glycero-3-phosphocholine + H2O = a 2-acyl-sn-glycero-3-phosphocholine + a fatty acid + H(+). In terms of biological role, catalyzes the hydrolysis of phosphatidylcholine with phospholipase A1 activity. May act as an allergen and induce hemolytic activity. This is Phospholipase A1 from Vespula maculifrons (Eastern yellow jacket).